Here is a 336-residue protein sequence, read N- to C-terminus: Potassium channel subfamily K member 1 (336 aa).

Residues 1-20 (MLQSLAGSSCVRLVERHRSA) lie on the Cytoplasmic side of the membrane. The helical transmembrane segment at 21–41 (WCFGFLVLGYLLYLVFGAVVF) threads the bilayer. Topologically, residues 42-103 (SSVELPYEDL…SNASGNWNWD (62 aa)) are extracellular. N-linked (GlcNAc...) asparagine glycosylation occurs at Asn-95. Positions 104 to 116 (FTSALFFASTVLS) form an intramembrane region, helical. Residues 117–122 (TTGYGH) lie within the membrane without spanning it. The interval 117–122 (TTGYGH) is selectivity filter 1. Over 123–132 (TVPLSDGGKA) the chain is Extracellular. A helical transmembrane segment spans residues 133–156 (FCIIYSVIGIPFTLLFLTAVVQRV). Residues 157-181 (TIHVTRRPVLYFHVRWGFSKQAVAI) are Cytoplasmic-facing. The chain crosses the membrane as a helical span at residues 182–202 (VHAVLLGVVTVSCFFFIPAAV). Residues 203 to 211 (FSVLEDDWN) lie on the Extracellular side of the membrane. Positions 212–224 (FLESFYFCFISLS) form an intramembrane region, helical. Positions 225–230 (TIGLGD) are selectivity filter 2. The stretch at 225–231 (TIGLGDY) is an intramembrane region. The Extracellular portion of the chain corresponds to 232–243 (VPGEGYNQKFRE). The helical transmembrane segment at 244–267 (LYKIGITCYLLLGLIAMLVVLETF) threads the bilayer. Over 268–336 (CELHELKKFR…PALADGASDH (69 aa)) the chain is Cytoplasmic. A Glycyl lysine isopeptide (Lys-Gly) (interchain with G-Cter in SUMO) cross-link involves residue Lys-274. Residues 293–299 (IIEHDQL) are important for intracellular retention in recycling endosomes. Positions 307–336 (QAAGVQEDQKQNEPFVSPQPPALADGASDH) are disordered.

It belongs to the two pore domain potassium channel (TC 1.A.1.8) family. As to quaternary structure, homodimer; disulfide-linked. Heterodimer with KCNK2; disulfide-linked. In astrocytes, forms mostly heterodimeric potassium channels with KCNK2, with only a minor proportion of functional channels containing homodimeric KCNK1. Interacts with KCNK3 and KCNK9, forming functional heterodimeric channels. Interacts with GNG4. Identified in a complex with PSD and ARF6; interacts only with PSD that is bound to ARF6. Interacts with UBE2I. Post-translationally, sumoylation is controversial. Sumoylated by UBE2I. Not sumoylated when expressed in xenopus oocytes or mammalian cells. Sumoylation inactivates the channel, but does not interfere with expression at the cell membrane. Sumoylation of a single subunit is sufficient to silence the dimeric channel. Sumoylation of KCNK1 is sufficient to silence heterodimeric channels formed by KCNK1 and KCNK3 or KCNK9. Desumoylated by SENP1; this activates the channel. Desumoylated by SENP1; this strongly increases halothane-mediated activation of heterodimeric channels formed with KCNK9. SENP1 treatment has no effect.

It is found in the cell membrane. It localises to the recycling endosome. Its subcellular location is the synaptic cell membrane. The protein resides in the cytoplasmic vesicle. The protein localises to the perikaryon. It is found in the cell projection. It localises to the dendrite. Its subcellular location is the apical cell membrane. The enzyme catalyses K(+)(in) = K(+)(out). It catalyses the reaction NH4(+)(in) = NH4(+)(out). The catalysed reaction is Na(+)(in) = Na(+)(out). It carries out the reaction Rb(+)(in) = Rb(+)(out). The enzyme catalyses Cs(+)(in) = Cs(+)(out). It catalyses the reaction Li(+)(in) = Li(+)(out). The catalysed reaction is L-glutamate(out) = L-glutamate(in). It carries out the reaction chloride(in) = chloride(out). Ion channel that contributes to passive transmembrane potassium transport and to the regulation of the resting membrane potential in brain astrocytes, but also in kidney and in other tissues. Forms dimeric channels through which potassium ions pass in accordance with their electrochemical gradient. The channel is selective for K(+) ions at physiological potassium concentrations and at neutral pH, but becomes permeable to Na(+) at subphysiological K(+) levels and upon acidification of the extracellular medium. The homodimer has very low potassium channel activity, when expressed in heterologous systems, and can function as weakly inward rectifying potassium channel. Channel activity is modulated by activation of serotonin receptors. Heterodimeric channels containing KCNK1 and KCNK2 have much higher activity, and may represent the predominant form in astrocytes. Heterodimeric channels containing KCNK1 and KCNK3 or KCNK9 have much higher activity. Heterodimeric channels formed by KCNK1 and KCNK9 may contribute to halothane-sensitive currents. Mediates outward rectifying potassium currents in dentate gyrus granule cells and contributes to the regulation of their resting membrane potential. Contributes to the regulation of action potential firing in dentate gyrus granule cells and down-regulates their intrinsic excitability. In astrocytes, the heterodimer formed by KCNK1 and KCNK2 is required for rapid glutamate release in response to activation of G-protein coupled receptors, such as F2R and CNR1. Required for normal ion and water transport in the kidney. Contributes to the regulation of the resting membrane potential of pancreatic beta cells. The low channel activity of homodimeric KCNK1 may be due to sumoylation. The low channel activity may be due to rapid internalization from the cell membrane and retention in recycling endosomes. Permeable to monovalent cations with ion selectivity for K(+) &gt; Rb(+) &gt;&gt; NH4(+) &gt;&gt; Cs(+) = Na(+) = Li(+). The sequence is that of Potassium channel subfamily K member 1 from Bos taurus (Bovine).